The sequence spans 199 residues: MTPKLILASSSPFRRMLMENAGLSFEAHAARIDERAVEAPLENAGAKPDAVALVLARAKAEEVSSRFPDSLVIGSDQTMSLGDSVFHKPTDLADAASHLQALSGVTHRLNSAVAIVSDGVVLWEHLAHAQLTMRPLTVEFIARHLARVGERALSSVGAYQLEGEGIQLFEKIEGDYFTILGLPMLPLLKKLRELGAIDG.

D76 serves as the catalytic Proton acceptor.

It belongs to the Maf family. YceF subfamily. The cofactor is a divalent metal cation.

It is found in the cytoplasm. The enzyme catalyses N(7)-methyl-GTP + H2O = N(7)-methyl-GMP + diphosphate + H(+). Nucleoside triphosphate pyrophosphatase that hydrolyzes 7-methyl-GTP (m(7)GTP). May have a dual role in cell division arrest and in preventing the incorporation of modified nucleotides into cellular nucleic acids. The chain is 7-methyl-GTP pyrophosphatase from Rhizobium johnstonii (strain DSM 114642 / LMG 32736 / 3841) (Rhizobium leguminosarum bv. viciae).